Here is a 484-residue protein sequence, read N- to C-terminus: tRNA sulfurtransferase (484 aa).

Positions 56-158 (NCLKKALSKV…GNRAYFYTEV (103 aa)) constitute a THUMP domain. Residues 176 to 177 (LV), lysine 257, glycine 279, and glutamine 288 each bind ATP. An intrachain disulfide couples cysteine 336 to cysteine 444. The Rhodanese domain maps to 396–479 (APEGAVIVDL…TRNAVPPSSQ (84 aa)). Cysteine 444 (cysteine persulfide intermediate) is an active-site residue.

This sequence belongs to the ThiI family.

The protein localises to the cytoplasm. It carries out the reaction [ThiI sulfur-carrier protein]-S-sulfanyl-L-cysteine + a uridine in tRNA + 2 reduced [2Fe-2S]-[ferredoxin] + ATP + H(+) = [ThiI sulfur-carrier protein]-L-cysteine + a 4-thiouridine in tRNA + 2 oxidized [2Fe-2S]-[ferredoxin] + AMP + diphosphate. The enzyme catalyses [ThiS sulfur-carrier protein]-C-terminal Gly-Gly-AMP + S-sulfanyl-L-cysteinyl-[cysteine desulfurase] + AH2 = [ThiS sulfur-carrier protein]-C-terminal-Gly-aminoethanethioate + L-cysteinyl-[cysteine desulfurase] + A + AMP + 2 H(+). It functions in the pathway cofactor biosynthesis; thiamine diphosphate biosynthesis. Its function is as follows. Catalyzes the ATP-dependent transfer of a sulfur to tRNA to produce 4-thiouridine in position 8 of tRNAs, which functions as a near-UV photosensor. Also catalyzes the transfer of sulfur to the sulfur carrier protein ThiS, forming ThiS-thiocarboxylate. This is a step in the synthesis of thiazole, in the thiamine biosynthesis pathway. The sulfur is donated as persulfide by IscS. This is tRNA sulfurtransferase from Pyrobaculum aerophilum (strain ATCC 51768 / DSM 7523 / JCM 9630 / CIP 104966 / NBRC 100827 / IM2).